A 157-amino-acid polypeptide reads, in one-letter code: Large ribosomal subunit protein bL34c (157 aa).

A chloroplast-targeting transit peptide spans 1-97 (MASLSTSVVA…GQRRRGLVVR (97 aa)).

It belongs to the bacterial ribosomal protein bL34 family. Part of the 50S ribosomal subunit.

It is found in the plastid. The protein localises to the chloroplast. Functionally, this protein binds directly to 23S ribosomal RNA. The protein is Large ribosomal subunit protein bL34c (RPL34) of Arabidopsis thaliana (Mouse-ear cress).